A 310-amino-acid polypeptide reads, in one-letter code: N-acetyl-gamma-glutamyl-phosphate reductase (310 aa).

Residue cysteine 117 is part of the active site.

It belongs to the NAGSA dehydrogenase family. Type 2 subfamily.

It is found in the cytoplasm. It carries out the reaction N-acetyl-L-glutamate 5-semialdehyde + phosphate + NADP(+) = N-acetyl-L-glutamyl 5-phosphate + NADPH + H(+). Its pathway is amino-acid biosynthesis; L-arginine biosynthesis; N(2)-acetyl-L-ornithine from L-glutamate: step 3/4. Functionally, catalyzes the NADPH-dependent reduction of N-acetyl-5-glutamyl phosphate to yield N-acetyl-L-glutamate 5-semialdehyde. This is N-acetyl-gamma-glutamyl-phosphate reductase from Rhizobium meliloti (strain 1021) (Ensifer meliloti).